Consider the following 150-residue polypeptide: D-aminoacyl-tRNA deacylase (150 aa).

Positions 137–138 (GP) match the Gly-cisPro motif, important for rejection of L-amino acids motif.

This sequence belongs to the DTD family. In terms of assembly, homodimer.

Its subcellular location is the cytoplasm. The enzyme catalyses glycyl-tRNA(Ala) + H2O = tRNA(Ala) + glycine + H(+). It carries out the reaction a D-aminoacyl-tRNA + H2O = a tRNA + a D-alpha-amino acid + H(+). An aminoacyl-tRNA editing enzyme that deacylates mischarged D-aminoacyl-tRNAs. Also deacylates mischarged glycyl-tRNA(Ala), protecting cells against glycine mischarging by AlaRS. Acts via tRNA-based rather than protein-based catalysis; rejects L-amino acids rather than detecting D-amino acids in the active site. By recycling D-aminoacyl-tRNA to D-amino acids and free tRNA molecules, this enzyme counteracts the toxicity associated with the formation of D-aminoacyl-tRNA entities in vivo and helps enforce protein L-homochirality. The chain is D-aminoacyl-tRNA deacylase from Listeria innocua serovar 6a (strain ATCC BAA-680 / CLIP 11262).